An 874-amino-acid polypeptide reads, in one-letter code: Alanine--tRNA ligase (874 aa).

Zn(2+) contacts are provided by His562, His566, Cys664, and His668.

The protein belongs to the class-II aminoacyl-tRNA synthetase family. Requires Zn(2+) as cofactor.

It localises to the cytoplasm. It carries out the reaction tRNA(Ala) + L-alanine + ATP = L-alanyl-tRNA(Ala) + AMP + diphosphate. Its function is as follows. Catalyzes the attachment of alanine to tRNA(Ala) in a two-step reaction: alanine is first activated by ATP to form Ala-AMP and then transferred to the acceptor end of tRNA(Ala). Also edits incorrectly charged Ser-tRNA(Ala) and Gly-tRNA(Ala) via its editing domain. This chain is Alanine--tRNA ligase, found in Neisseria meningitidis serogroup A / serotype 4A (strain DSM 15465 / Z2491).